Consider the following 381-residue polypeptide: Alkanesulfonate monooxygenase (381 aa).

The protein belongs to the SsuD family. Homotetramer.

The enzyme catalyses an alkanesulfonate + FMNH2 + O2 = an aldehyde + FMN + sulfite + H2O + 2 H(+). In terms of biological role, catalyzes the desulfonation of aliphatic sulfonates. In Shigella flexneri, this protein is Alkanesulfonate monooxygenase.